The sequence spans 251 residues: 2-amino-5-chloromuconate deaminase (251 aa).

Monomer.

The catalysed reaction is (2Z,4E)-2-aminomuconate + H2O = (2Z,4E)-2-hydroxyhexa-2,4-dienedioate + NH4(+). Its pathway is xenobiotic degradation; 4-chloronitrobenzene degradation. It participates in xenobiotic degradation; nitrobenzene degradation. With respect to regulation, cysteine residue modifying agents such as p-chloromercuribenzoate and the SH-binding metals Zn(2+), Ni(2+) and Cu(2+) completely inhibit deaminase activity, whereas Ca(2+), Mg(2+) and the histidine residue-modifying agent diethyl pyrocarbonate inhibit the activity by 23 to 50%. In terms of biological role, involved in the biodegradation of xenobiotic compounds, such as nitrobenzene and 4-chloronitrobenzene (4-CNB). CnbZ preferentially catalyzes the deamination of 2-amino-5-chloromuconate (2A5CM) to yield 2-hydroxy-5-chloromuconate (2H5CM). Also able to catalyze the deamination of 2-aminomuconate to yield 2-hydroxymuconate, which spontaneously converts into its keto form, 2-oxalocrotonate. The protein is 2-amino-5-chloromuconate deaminase of Comamonas testosteroni (Pseudomonas testosteroni).